The primary structure comprises 80 residues: Small ribosomal subunit protein uS17 (80 aa).

Belongs to the universal ribosomal protein uS17 family. In terms of assembly, part of the 30S ribosomal subunit.

Its function is as follows. One of the primary rRNA binding proteins, it binds specifically to the 5'-end of 16S ribosomal RNA. In Brucella suis (strain ATCC 23445 / NCTC 10510), this protein is Small ribosomal subunit protein uS17.